The sequence spans 159 residues: 2-C-methyl-D-erythritol 2,4-cyclodiphosphate synthase (159 aa).

Residues D10 and H12 each contribute to the a divalent metal cation site. 4-CDP-2-C-methyl-D-erythritol 2-phosphate-binding positions include 10-12 (DVH) and 36-37 (HS). H44 serves as a coordination point for a divalent metal cation. 4-CDP-2-C-methyl-D-erythritol 2-phosphate-binding positions include 58 to 60 (DIG), 63 to 67 (FPDTD), 102 to 108 (AQAPKMA), 134 to 137 (TTTE), F141, and R144.

It belongs to the IspF family. As to quaternary structure, homotrimer. Requires a divalent metal cation as cofactor.

It catalyses the reaction 4-CDP-2-C-methyl-D-erythritol 2-phosphate = 2-C-methyl-D-erythritol 2,4-cyclic diphosphate + CMP. It participates in isoprenoid biosynthesis; isopentenyl diphosphate biosynthesis via DXP pathway; isopentenyl diphosphate from 1-deoxy-D-xylulose 5-phosphate: step 4/6. Involved in the biosynthesis of isopentenyl diphosphate (IPP) and dimethylallyl diphosphate (DMAPP), two major building blocks of isoprenoid compounds. Catalyzes the conversion of 4-diphosphocytidyl-2-C-methyl-D-erythritol 2-phosphate (CDP-ME2P) to 2-C-methyl-D-erythritol 2,4-cyclodiphosphate (ME-CPP) with a corresponding release of cytidine 5-monophosphate (CMP). This is 2-C-methyl-D-erythritol 2,4-cyclodiphosphate synthase from Idiomarina loihiensis (strain ATCC BAA-735 / DSM 15497 / L2-TR).